Consider the following 656-residue polypeptide: DNA ligase (656 aa).

Residues 32 to 36 (DAIYD) and 81 to 82 (SL) contribute to the NAD(+) site. The N6-AMP-lysine intermediate role is filled by K112. NAD(+) contacts are provided by R133, E167, and K306. Zn(2+)-binding residues include C400, C403, C416, and C421. The region spanning 577 to 656 (KSSSVFNNKT…ELLKRLKELD (80 aa)) is the BRCT domain.

The protein belongs to the NAD-dependent DNA ligase family. LigA subfamily. It depends on Mg(2+) as a cofactor. The cofactor is Mn(2+).

It carries out the reaction NAD(+) + (deoxyribonucleotide)n-3'-hydroxyl + 5'-phospho-(deoxyribonucleotide)m = (deoxyribonucleotide)n+m + AMP + beta-nicotinamide D-nucleotide.. DNA ligase that catalyzes the formation of phosphodiester linkages between 5'-phosphoryl and 3'-hydroxyl groups in double-stranded DNA using NAD as a coenzyme and as the energy source for the reaction. It is essential for DNA replication and repair of damaged DNA. In Helicobacter pylori (strain ATCC 700392 / 26695) (Campylobacter pylori), this protein is DNA ligase.